Consider the following 588-residue polypeptide: Glutathione/L-cysteine transport system ATP-binding/permease protein CydD (588 aa).

Residues 1–15 (MNKSRQKELTRWLKQ) are Cytoplasmic-facing. Helical transmembrane passes span 16–36 (QSVISQRWLNISRLLGFVSGI) and 37–57 (LIIAQAWFMARILQHMIMENI). The ABC transmembrane type-1 domain maps to 20–306 (SQRWLNISRL…APEFFQPLRD (287 aa)). Over 58-136 (PREALLLPFT…LEQIDDMHDY (79 aa)) the chain is Cytoplasmic. A helical membrane pass occupies residues 137 to 157 (YARYLPQMALAVSVPLLIVVA). At 158-161 (IFPS) the chain is on the periplasmic side. The chain crosses the membrane as a helical span at residues 162–182 (NWAAALILLGTAPLIPLFMAL). At 183-249 (VGMGAADANR…MEVLRLAFLS (67 aa)) the chain is on the cytoplasmic side. Residues 250–270 (SGILEFFTSLSIALVAVYFGF) form a helical membrane-spanning segment. The Periplasmic portion of the chain corresponds to 271-276 (SYLGEL). Residues 277 to 297 (DFGHYDTGVTLAAGFLALILA) form a helical membrane-spanning segment. Over 298-573 (PEFFQPLRDL…QGRYAELSVA (276 aa)) the chain is Cytoplasmic. The 234-residue stretch at 339–572 (EAELASTDPV…EQGRYAELSV (234 aa)) folds into the ABC transporter domain. 373–380 (LPAGQRAV) contacts ATP.

This sequence belongs to the ABC transporter superfamily. Cysteine exporter (TC 3.A.1.129.1) family. In terms of assembly, forms a heterodimer with CydC.

It localises to the cell inner membrane. It catalyses the reaction L-cysteine(in) + ATP + H2O = L-cysteine(out) + ADP + phosphate + H(+). The enzyme catalyses glutathione(in) + ATP + H2O = glutathione(out) + ADP + phosphate + H(+). Its activity is regulated as follows. ATPase activity is stimulated by various thiol compounds. The presence of heme leads to a further enhancement of thiol-stimulated ATPase activity, although a large excess of heme inhibits activity. Glutathione transport is inhibited by sodium orthovanadate, an inhibitor of ABC-type transport systems, but not by the proton ionophore carbonyl cyanide m-chlorophenylhydrazone (CCCP). In terms of biological role, part of the ABC transporter complex CydDC that exports the reduced low-molecular-weight thiols cysteine and glutathione to the periplasm. Export of these thiol-containing redox-active molecules may be crucial for redox homeostasis in the periplasm, permitting correct assembly of various respiratory complexes and formation of correct disulfide bonds in periplasmic and secreted proteins. CydD contains transmembrane domains (TMD), which form a pore in the inner membrane, and an ATP-binding domain (NBD), which is responsible for energy generation. Required for the assembly of functional cytochrome bd-type quinol oxidases and periplasmic c-type cytochromes. Overexpression of CydDC under anaerobic conditions also results in the formation of a heme biosynthesis-derived pigment, P-574. CydDC binds heme b, but heme is probably not transported by the complex and instead has a role in regulating ATPase activity. Functionally, conversely, a more recent study suggests an alternative function of CydDC: authors suggest that CydDC does not mediate the export of L-cysteine but rather reduces cytoplasmic L-cystine to L-cysteine. The principle function of CydDC would be to maintain the reduced state of cytoplasmic L-cysteine, thereby providing an important connection between sulfur metabolism, oxidative stress and resistance to antibiotics. In Escherichia coli (strain K12), this protein is Glutathione/L-cysteine transport system ATP-binding/permease protein CydD.